The primary structure comprises 196 residues: Holliday junction branch migration complex subunit RuvA (196 aa).

The interval 1-63 (MYDYIKGKLS…DDAHLLFGFH (63 aa)) is domain I. Residues 64-142 (TENEKEIFLN…EASGESATSR (79 aa)) form a domain II region. The segment at 143-148 (KVSSEQ) is flexible linker. The segment at 148 to 196 (QNSNLEEAMEALLALGYKATELKKVKAFFEGTNETVEQYIKSSLKMLMK) is domain III.

The protein belongs to the RuvA family. Homotetramer. Forms an RuvA(8)-RuvB(12)-Holliday junction (HJ) complex. HJ DNA is sandwiched between 2 RuvA tetramers; dsDNA enters through RuvA and exits via RuvB. An RuvB hexamer assembles on each DNA strand where it exits the tetramer. Each RuvB hexamer is contacted by two RuvA subunits (via domain III) on 2 adjacent RuvB subunits; this complex drives branch migration. In the full resolvosome a probable DNA-RuvA(4)-RuvB(12)-RuvC(2) complex forms which resolves the HJ.

Its subcellular location is the cytoplasm. Functionally, the RuvA-RuvB-RuvC complex processes Holliday junction (HJ) DNA during genetic recombination and DNA repair, while the RuvA-RuvB complex plays an important role in the rescue of blocked DNA replication forks via replication fork reversal (RFR). RuvA specifically binds to HJ cruciform DNA, conferring on it an open structure. The RuvB hexamer acts as an ATP-dependent pump, pulling dsDNA into and through the RuvAB complex. HJ branch migration allows RuvC to scan DNA until it finds its consensus sequence, where it cleaves and resolves the cruciform DNA. In Streptococcus agalactiae serotype Ia (strain ATCC 27591 / A909 / CDC SS700), this protein is Holliday junction branch migration complex subunit RuvA.